Here is a 153-residue protein sequence, read N- to C-terminus: MAKLILTQEVAGLGTSGDVVEVKNGYARNYLLPRGFATVWTKGGEKQVESLQKARAARAVANLEDAQAQAAQLQSAPVQLERTAGAEGRLFGAVQTADVAEAIEAAGLGSVDKRSITLPAHIKSVGNHEAQVRLHEDVIATVQLQVVAAKAKK.

It belongs to the bacterial ribosomal protein bL9 family.

Functionally, binds to the 23S rRNA. In Micrococcus luteus (strain ATCC 4698 / DSM 20030 / JCM 1464 / CCM 169 / CCUG 5858 / IAM 1056 / NBRC 3333 / NCIMB 9278 / NCTC 2665 / VKM Ac-2230) (Micrococcus lysodeikticus), this protein is Large ribosomal subunit protein bL9.